The following is a 316-amino-acid chain: Probable cell division protein WhiA (316 aa).

Residues 280–313 constitute a DNA-binding region (H-T-H motif); it reads SLKELGEMLEPPVGKSGVNHRLRKIEKIAEELRT.

It belongs to the WhiA family.

Functionally, involved in cell division and chromosome segregation. This Clostridium perfringens (strain 13 / Type A) protein is Probable cell division protein WhiA.